The following is a 112-amino-acid chain: Putative pterin-4-alpha-carbinolamine dehydratase (112 aa).

This sequence belongs to the pterin-4-alpha-carbinolamine dehydratase family.

The catalysed reaction is (4aS,6R)-4a-hydroxy-L-erythro-5,6,7,8-tetrahydrobiopterin = (6R)-L-erythro-6,7-dihydrobiopterin + H2O. This Shewanella baltica (strain OS155 / ATCC BAA-1091) protein is Putative pterin-4-alpha-carbinolamine dehydratase.